Here is a 331-residue protein sequence, read N- to C-terminus: Ketol-acid reductoisomerase (NADP(+)) (331 aa).

Residues 2–182 (AQLFYDSDAD…GGTRAGILET (181 aa)) enclose the KARI N-terminal Rossmann domain. NADP(+) is bound by residues 25 to 28 (YGSQ), serine 51, serine 53, and 83 to 86 (DEFQ). The active site involves histidine 108. Glycine 134 is an NADP(+) binding site. The KARI C-terminal knotted domain occupies 183 to 328 (NFKEETETDL…KGLRSMFSWL (146 aa)). Mg(2+)-binding residues include aspartate 191, glutamate 195, glutamate 227, and glutamate 231. Serine 252 provides a ligand contact to substrate.

It belongs to the ketol-acid reductoisomerase family. It depends on Mg(2+) as a cofactor.

The enzyme catalyses (2R)-2,3-dihydroxy-3-methylbutanoate + NADP(+) = (2S)-2-acetolactate + NADPH + H(+). The catalysed reaction is (2R,3R)-2,3-dihydroxy-3-methylpentanoate + NADP(+) = (S)-2-ethyl-2-hydroxy-3-oxobutanoate + NADPH + H(+). Its pathway is amino-acid biosynthesis; L-isoleucine biosynthesis; L-isoleucine from 2-oxobutanoate: step 2/4. It participates in amino-acid biosynthesis; L-valine biosynthesis; L-valine from pyruvate: step 2/4. Its function is as follows. Involved in the biosynthesis of branched-chain amino acids (BCAA). Catalyzes an alkyl-migration followed by a ketol-acid reduction of (S)-2-acetolactate (S2AL) to yield (R)-2,3-dihydroxy-isovalerate. In the isomerase reaction, S2AL is rearranged via a Mg-dependent methyl migration to produce 3-hydroxy-3-methyl-2-ketobutyrate (HMKB). In the reductase reaction, this 2-ketoacid undergoes a metal-dependent reduction by NADPH to yield (R)-2,3-dihydroxy-isovalerate. This is Ketol-acid reductoisomerase (NADP(+)) from Parasynechococcus marenigrum (strain WH8102).